A 137-amino-acid polypeptide reads, in one-letter code: Putative pre-16S rRNA nuclease (137 aa).

The protein belongs to the YqgF nuclease family.

It localises to the cytoplasm. In terms of biological role, could be a nuclease involved in processing of the 5'-end of pre-16S rRNA. The protein is Putative pre-16S rRNA nuclease of Bacillus cytotoxicus (strain DSM 22905 / CIP 110041 / 391-98 / NVH 391-98).